A 237-amino-acid polypeptide reads, in one-letter code: Proteasome subunit beta type-1-B (237 aa).

Belongs to the peptidase T1B family. In terms of assembly, the 26S proteasome consists of a 20S proteasome core and two 19S regulatory subunits. The 20S proteasome core is composed of 28 subunits that are arranged in four stacked rings, resulting in a barrel-shaped structure. The two end rings are each formed by seven alpha subunits, and the two central rings are each formed by seven beta subunits. The catalytic chamber with the active sites is on the inside of the barrel.

The protein resides in the cytoplasm. It is found in the nucleus. Its function is as follows. Non-catalytic component of the proteasome, a multicatalytic proteinase complex which is characterized by its ability to cleave peptides with Arg, Phe, Tyr, Leu, and Glu adjacent to the leaving group at neutral or slightly basic pH. The proteasome has an ATP-dependent proteolytic activity. This is Proteasome subunit beta type-1-B (psmb1-B) from Carassius auratus (Goldfish).